We begin with the raw amino-acid sequence, 130 residues long: MSKLSSDELLDVFKEMTLLELSDFVKKFEETFEVTAAAPVSVAVAGAPAAGEAGEAAEEQSEFDVILESAGDKKIGVIKVVREIVSGLGLKEAKDLVDGVPKLLLEKVAKEAADDAKAKLEATGATVSVK.

It belongs to the bacterial ribosomal protein bL12 family. Homodimer. Part of the ribosomal stalk of the 50S ribosomal subunit. Forms a multimeric L10(L12)X complex, where L10 forms an elongated spine to which 2 to 4 L12 dimers bind in a sequential fashion. Binds GTP-bound translation factors.

Forms part of the ribosomal stalk which helps the ribosome interact with GTP-bound translation factors. Is thus essential for accurate translation. The chain is Large ribosomal subunit protein bL12 from Mycobacterium leprae (strain TN).